The following is a 149-amino-acid chain: Small ribosomal subunit protein bS16 (149 aa).

The segment at Lys115–Glu149 is disordered. The segment covering Ala119–Ala131 has biased composition (basic and acidic residues). The span at Ala139–Glu149 shows a compositional bias: acidic residues.

The protein belongs to the bacterial ribosomal protein bS16 family.

The sequence is that of Small ribosomal subunit protein bS16 from Bifidobacterium adolescentis (strain ATCC 15703 / DSM 20083 / NCTC 11814 / E194a).